We begin with the raw amino-acid sequence, 206 residues long: ATP-dependent Clp protease proteolytic subunit (206 aa).

The active-site Nucleophile is Ser-108. His-133 is an active-site residue.

The protein belongs to the peptidase S14 family. Fourteen ClpP subunits assemble into 2 heptameric rings which stack back to back to give a disk-like structure with a central cavity, resembling the structure of eukaryotic proteasomes.

It is found in the cytoplasm. The enzyme catalyses Hydrolysis of proteins to small peptides in the presence of ATP and magnesium. alpha-casein is the usual test substrate. In the absence of ATP, only oligopeptides shorter than five residues are hydrolyzed (such as succinyl-Leu-Tyr-|-NHMec, and Leu-Tyr-Leu-|-Tyr-Trp, in which cleavage of the -Tyr-|-Leu- and -Tyr-|-Trp bonds also occurs).. In terms of biological role, cleaves peptides in various proteins in a process that requires ATP hydrolysis. Has a chymotrypsin-like activity. Plays a major role in the degradation of misfolded proteins. The protein is ATP-dependent Clp protease proteolytic subunit of Chromohalobacter salexigens (strain ATCC BAA-138 / DSM 3043 / CIP 106854 / NCIMB 13768 / 1H11).